The sequence spans 182 residues: Malignant T-cell-amplified sequence 1 homolog (182 aa).

In terms of domain architecture, PUA spans 93–172 (VTMQQVDKGA…IGIETYHFLN (80 aa)).

It belongs to the MCTS1 family. In terms of assembly, interacts with DENR.

It is found in the cytoplasm. Functionally, regulates translation as part of a complex with DENR. Specifically required for translational re-initiation in mRNAs containing upstream open reading frames (uORFs). Not required for standard translational initiation. Regulates expression of a subset of gene products including mbc, InR and EcR. In Drosophila melanogaster (Fruit fly), this protein is Malignant T-cell-amplified sequence 1 homolog.